We begin with the raw amino-acid sequence, 395 residues long: Elongation factor Tu (395 aa).

Residues 10 to 204 (KTHANIGTIG…AVDEYIPTPE (195 aa)) form the tr-type G domain. Residues 19–26 (GHVDHGKT) are G1. Residue 19 to 26 (GHVDHGKT) coordinates GTP. Thr26 is a Mg(2+) binding site. Residues 60–64 (GITIN) form a G2 region. A G3 region spans residues 81–84 (DCPG). GTP contacts are provided by residues 81–85 (DCPGH) and 136–139 (NKVD). The tract at residues 136 to 139 (NKVD) is G4. A G5 region spans residues 174–176 (SAL).

Belongs to the TRAFAC class translation factor GTPase superfamily. Classic translation factor GTPase family. EF-Tu/EF-1A subfamily. In terms of assembly, monomer.

It is found in the cytoplasm. The catalysed reaction is GTP + H2O = GDP + phosphate + H(+). Functionally, GTP hydrolase that promotes the GTP-dependent binding of aminoacyl-tRNA to the A-site of ribosomes during protein biosynthesis. The protein is Elongation factor Tu of Macrococcus caseolyticus (strain JCSC5402) (Macrococcoides caseolyticum).